The primary structure comprises 64 residues: Alpha-conotoxin-like Ac1.1a (64 aa).

The signal sequence occupies residues 1–21; it reads MGMRMMFTLFLLVVLTTTVVS. Positions 22-47 are excised as a propeptide; sequence YPSDSASDGRDDEAKDERSDMYELKR. 2 cysteine pairs are disulfide-bonded: Cys51–Cys56 and Cys52–Cys62. Cys62 is modified (cysteine amide).

It belongs to the conotoxin A superfamily. In terms of tissue distribution, expressed by the venom duct.

The protein localises to the secreted. Alpha-conotoxins act on postsynaptic membranes, they bind to the nicotinic acetylcholine receptors (nAChR) and thus inhibit them. The sequence is that of Alpha-conotoxin-like Ac1.1a from Conus achatinus (Little frog cone).